Here is a 243-residue protein sequence, read N- to C-terminus: Probable transcriptional regulatory protein Smlt3713 (243 aa).

It belongs to the TACO1 family.

The protein resides in the cytoplasm. In Stenotrophomonas maltophilia (strain K279a), this protein is Probable transcriptional regulatory protein Smlt3713.